The following is a 686-amino-acid chain: Acyl-CoA synthetase short-chain family member 3, mitochondrial (686 aa).

Residues 1 to 29 constitute a mitochondrion transit peptide; the sequence is MKPSWLQCHKVTSAGGLGGPLPGSSPARG. 227 to 230 is a CoA binding site; it reads EPGR. Residues 425–427 and 446–451 each bind ATP; these read GER and DHWWQT. At Lys518 the chain carries N6-succinyllysine. Lys524 bears the N6-acetyllysine mark. ATP is bound by residues Asp539, Arg554, and Arg565. CoA is bound at residue Arg624.

This sequence belongs to the ATP-dependent AMP-binding enzyme family.

It is found in the mitochondrion matrix. It catalyses the reaction acetate + ATP + CoA = acetyl-CoA + AMP + diphosphate. It carries out the reaction propanoate + ATP + CoA = propanoyl-CoA + AMP + diphosphate. The enzyme catalyses butanoate + ATP + CoA = butanoyl-CoA + AMP + diphosphate. Functionally, catalyzes the synthesis of acetyl-CoA from short-chain fatty acids. Propionate is the preferred substrate but can also utilize acetate and butyrate with a much lower affinity. The sequence is that of Acyl-CoA synthetase short-chain family member 3, mitochondrial (ACSS3) from Pongo abelii (Sumatran orangutan).